The chain runs to 210 residues: Dynein regulatory complex protein 12 (210 aa).

The disordered stretch occupies residues methionine 1–alanine 23. Positions glutamate 7–asparagine 20 are enriched in basic residues. Positions arginine 49–aspartate 161 form a coiled coil. The disordered stretch occupies residues histidine 188 to leucine 210.

This sequence belongs to the DRC12 family. In terms of assembly, component of the nexin-dynein regulatory complex (N-DRC).

The protein resides in the cytoplasm. It localises to the cytoskeleton. The protein localises to the flagellum axoneme. Its function is as follows. Component of the nexin-dynein regulatory complex (N-DRC), a key regulator of ciliary/flagellar motility which maintains the alignment and integrity of the distal axoneme and regulates microtubule sliding in motile axonemes. This Homo sapiens (Human) protein is Dynein regulatory complex protein 12.